Consider the following 161-residue polypeptide: Nucleotide-binding protein Tbd_1846 (161 aa).

Belongs to the YajQ family.

Nucleotide-binding protein. This Thiobacillus denitrificans (strain ATCC 25259 / T1) protein is Nucleotide-binding protein Tbd_1846.